The primary structure comprises 587 residues: MGFYSMPRYFQNMPQVGKPLKKADAANEEQLKKIEEEIHQLIKEAQEAGKADADVNKRGELTALQRIEKLVEPGSWRPLNTLFNPQGNKNGSVAIVKGLGRVNGKWCVVVASDNKKLAGAWVPGQAECLLRASDTAKTLHVPLVYVLNCSGVKFDEQEKVYPNRRGGGTPFFRNAELNQLGIPVIVGIYGTNPAGGGYHSISPTVIIAHEKANMAVGGAGIMGGMNPKGHVDLEYANEIADMVDRTGKTEPPGAVDIHYTETGFMREVYASEEGVLEGIKKYVGMLPKYDPEFFRVDDPKAPAFPADDLYSMVPLNDKRAYDIYNVIARLFDNSELHEYKKGYGPEMVTGLAKVNGLLVGVVANVQGLLMNYPEYKAAGSVGIGGKLYRQGLVKMNEFVTLCARDRLPIVWIQDTTGIDVGNDAEKAELLGLGQSLIYSIQTSHIPQFEITLRKGTAAAHYVLGGPQGNDTNAFSIGTAATEIAVMNGETAATAMYSRRLAKDRKAGKDLQPTIDKMNNLIQAFYTKSRPKVCAELGLVDEIVDMNKIRGYVEAFTEAAYQNPESICPFHQMILPRAIREFETFVKK.

Residues 31 to 298 (LKKIEEEIHQ…YDPEFFRVDD (268 aa)) enclose the CoA carboxyltransferase N-terminal domain. The tract at residues 31-558 (LKKIEEEIHQ…RGYVEAFTEA (528 aa)) is carboxyltransferase. Positions 295 to 558 (RVDDPKAPAF…RGYVEAFTEA (264 aa)) constitute a CoA carboxyltransferase C-terminal domain.

In terms of assembly, heterooctamer consisting of two alpha, two beta, two gamma and two delta subunits.

It catalyses the reaction (2E)-glutaconyl-CoA + Na(+)(in) + H(+) = (2E)-butenoyl-CoA + Na(+)(out) + CO2. The protein operates within amino-acid degradation; L-glutamate degradation via hydroxyglutarate pathway; crotonoyl-CoA from L-glutamate: step 5/5. In terms of biological role, decarboxylase subunit of the primary sodium pump glutaconyl-CoA decarboxylase (GCD). This is Glutaconyl-CoA decarboxylase subunit alpha (gcdA) from Acidaminococcus fermentans (strain ATCC 25085 / DSM 20731 / CCUG 9996 / CIP 106432 / VR4).